A 191-amino-acid polypeptide reads, in one-letter code: RNA pyrophosphohydrolase (191 aa).

The 144-residue stretch at glycine 6–serine 149 folds into the Nudix hydrolase domain. Residues glycine 38–glycine 59 carry the Nudix box motif. Positions glycine 162–arginine 191 are disordered.

Belongs to the Nudix hydrolase family. RppH subfamily. A divalent metal cation serves as cofactor.

Accelerates the degradation of transcripts by removing pyrophosphate from the 5'-end of triphosphorylated RNA, leading to a more labile monophosphorylated state that can stimulate subsequent ribonuclease cleavage. This chain is RNA pyrophosphohydrolase, found in Methylococcus capsulatus (strain ATCC 33009 / NCIMB 11132 / Bath).